A 155-amino-acid chain; its full sequence is Ribosomal RNA large subunit methyltransferase H (155 aa).

S-adenosyl-L-methionine-binding positions include L73, G104, and 123–128 (LSRMTF).

This sequence belongs to the RNA methyltransferase RlmH family. As to quaternary structure, homodimer.

It is found in the cytoplasm. It carries out the reaction pseudouridine(1915) in 23S rRNA + S-adenosyl-L-methionine = N(3)-methylpseudouridine(1915) in 23S rRNA + S-adenosyl-L-homocysteine + H(+). Specifically methylates the pseudouridine at position 1915 (m3Psi1915) in 23S rRNA. The chain is Ribosomal RNA large subunit methyltransferase H from Methylococcus capsulatus (strain ATCC 33009 / NCIMB 11132 / Bath).